The following is a 285-amino-acid chain: Probable endonuclease 4 (285 aa).

9 residues coordinate Zn(2+): H69, H109, E145, D179, H182, H216, D229, H231, and E261.

This sequence belongs to the AP endonuclease 2 family. The cofactor is Zn(2+).

It carries out the reaction Endonucleolytic cleavage to 5'-phosphooligonucleotide end-products.. Functionally, endonuclease IV plays a role in DNA repair. It cleaves phosphodiester bonds at apurinic or apyrimidinic (AP) sites, generating a 3'-hydroxyl group and a 5'-terminal sugar phosphate. This chain is Probable endonuclease 4, found in Escherichia coli O127:H6 (strain E2348/69 / EPEC).